A 561-amino-acid chain; its full sequence is SH3 domain-binding protein 2 (561 aa).

One can recognise a PH domain in the interval 26–130 (GVAKAGYLHK…WMALLRREIG (105 aa)). Disordered stretches follow at residues 160–316 (VDIS…GACS) and 333–451 (KLKS…YEKV). The span at 170 to 188 (DNEDYEHDDEDDSYLEPDS) shows a compositional bias: acidic residues. A phosphotyrosine; by SYK mark is found at Y174 and Y183. The SH3-binding motif lies at 201–210 (PPAYPPPPVP). Composition is skewed to pro residues over residues 202–213 (PAYPPPPVPTPR) and 233–242 (PLLPPPPPKH). Residues 252–266 (EDSKRDPLCPRRAEP) are compositionally biased toward basic and acidic residues. S278 is subject to Phosphoserine. Residues 342-354 (RGPPTSEPPPVPA) show a composition bias toward pro residues. Residues S416 and S427 each carry the phosphoserine modification. Residue Y448 is modified to Phosphotyrosine; by SYK. The 99-residue stretch at 457–555 (VFVNTTESCE…HQSLLLRHPY (99 aa)) folds into the SH2 domain.

In terms of processing, phosphorylated. Phosphorylation at Tyr-448 may stimulate the activity of the LYN kinase. As to expression, expressed in a variety of tissues including lung, liver, skeletal muscle, kidney and pancreas.

Binds differentially to the SH3 domains of certain proteins of signal transduction pathways. Binds to phosphatidylinositols; linking the hemopoietic tyrosine kinase fes to the cytoplasmic membrane in a phosphorylation dependent mechanism. The chain is SH3 domain-binding protein 2 (SH3BP2) from Homo sapiens (Human).